We begin with the raw amino-acid sequence, 501 residues long: ATP-dependent rRNA helicase RRP3 (501 aa).

The stretch at 3-44 (KIVKRKEKKANDELTSLAEKIRAKALENQKKLIEAEKEGGSE) forms a coiled coil. Residues 36–79 (EAEKEGGSESDSEEDATAEKKKVLKSKSKSTVSTQNENTNEDES) are disordered. Phosphoserine is present on residues Ser43, Ser45, and Ser47. Positions 81-109 (ESFSELNLVPELIQACKNLNYSKPTPIQS) match the Q motif motif. One can recognise a Helicase ATP-binding domain in the interval 112–284 (IPPALEGHDI…RASLTNPVKC (173 aa)). 125–132 (AQTGSGKT) lines the ATP pocket. The DEAD box signature appears at 231 to 234 (DEAD). In terms of domain architecture, Helicase C-terminal spans 307-461 (LKNTYLIYLL…NIILTLRDSV (155 aa)). The disordered stretch occupies residues 480–501 (IARGKGRRGRMMTRENMDMGER). Positions 491–501 (MTRENMDMGER) are enriched in basic and acidic residues.

The protein belongs to the DEAD box helicase family. DDX47/RRP3 subfamily. Interacts with the SSU processome.

It localises to the nucleus. The catalysed reaction is ATP + H2O = ADP + phosphate + H(+). Its function is as follows. ATP-dependent rRNA helicase required for pre-ribosomal RNA processing. Involved in the maturation of the 35S-pre-rRNA and to its cleavage to mature 18S rRNA. The polypeptide is ATP-dependent rRNA helicase RRP3 (Saccharomyces cerevisiae (strain YJM789) (Baker's yeast)).